We begin with the raw amino-acid sequence, 401 residues long: Exodeoxyribonuclease 7 large subunit (401 aa).

The protein belongs to the XseA family. As to quaternary structure, heterooligomer composed of large and small subunits.

It is found in the cytoplasm. The enzyme catalyses Exonucleolytic cleavage in either 5'- to 3'- or 3'- to 5'-direction to yield nucleoside 5'-phosphates.. In terms of biological role, bidirectionally degrades single-stranded DNA into large acid-insoluble oligonucleotides, which are then degraded further into small acid-soluble oligonucleotides. The chain is Exodeoxyribonuclease 7 large subunit from Lachnoclostridium phytofermentans (strain ATCC 700394 / DSM 18823 / ISDg) (Clostridium phytofermentans).